We begin with the raw amino-acid sequence, 235 residues long: Large ribosomal subunit protein uL1 (235 aa).

The protein belongs to the universal ribosomal protein uL1 family. In terms of assembly, part of the 50S ribosomal subunit.

Functionally, binds directly to 23S rRNA. The L1 stalk is quite mobile in the ribosome, and is involved in E site tRNA release. Its function is as follows. Protein L1 is also a translational repressor protein, it controls the translation of the L11 operon by binding to its mRNA. The protein is Large ribosomal subunit protein uL1 of Renibacterium salmoninarum (strain ATCC 33209 / DSM 20767 / JCM 11484 / NBRC 15589 / NCIMB 2235).